Here is a 510-residue protein sequence, read N- to C-terminus: Histidine ammonia-lyase (510 aa).

The 5-imidazolinone (Ala-Gly) cross-link spans 143-145 (ASG). Serine 144 bears the 2,3-didehydroalanine (Ser) mark.

Belongs to the PAL/histidase family. Contains an active site 4-methylidene-imidazol-5-one (MIO), which is formed autocatalytically by cyclization and dehydration of residues Ala-Ser-Gly.

Its subcellular location is the cytoplasm. The enzyme catalyses L-histidine = trans-urocanate + NH4(+). It functions in the pathway amino-acid degradation; L-histidine degradation into L-glutamate; N-formimidoyl-L-glutamate from L-histidine: step 1/3. This is Histidine ammonia-lyase from Aliivibrio fischeri (strain MJ11) (Vibrio fischeri).